We begin with the raw amino-acid sequence, 61 residues long: Small ribosomal subunit protein uS14 (61 aa).

4 residues coordinate Zn(2+): Cys-24, Cys-27, Cys-40, and Cys-43.

This sequence belongs to the universal ribosomal protein uS14 family. Zinc-binding uS14 subfamily. Part of the 30S ribosomal subunit. Contacts proteins S3 and S10. It depends on Zn(2+) as a cofactor.

Its function is as follows. Binds 16S rRNA, required for the assembly of 30S particles and may also be responsible for determining the conformation of the 16S rRNA at the A site. In Frankia alni (strain DSM 45986 / CECT 9034 / ACN14a), this protein is Small ribosomal subunit protein uS14.